A 404-amino-acid chain; its full sequence is Epoxide hydrolase 1 (404 aa).

A helical transmembrane segment spans residues 74 to 96 (ILVRLLQFYYFVKFSAILFLGFA). The 250-residue stretch at 140-389 (PLMLFIHGYP…ASHWVQQDEP (250 aa)) folds into the AB hydrolase-1 domain. The active-site Nucleophile is D215. Y327 functions as the Proton donor in the catalytic mechanism. H382 (proton acceptor) is an active-site residue.

Belongs to the AB hydrolase superfamily. Epoxide hydrolase family.

It localises to the membrane. The enzyme catalyses an epoxide + H2O = an ethanediol. It carries out the reaction 8,9-epoxy-(5Z,11Z,14Z)-eicosatrienoate + H2O = 8,9-dihydroxy-(5Z,11Z,14Z)-eicosatrienoate. The catalysed reaction is 11,12-epoxy-(5Z,8Z,14Z)-eicosatrienoate + H2O = 11,12-dihydroxy-(5Z,8Z,14Z)-eicosatrienoate. It catalyses the reaction 14,15-epoxy-(5Z,8Z,11Z)-eicosatrienoate + H2O = 14,15-dihydroxy-(5Z,8Z,11Z)-eicosatrienoate. The enzyme catalyses 12,13-epoxy-(9Z)-octadecenoate + H2O = 12,13-dihydroxy-(9Z)-octadecenoate. It carries out the reaction 9,10-epoxy-(12Z)-octadecenoate + H2O = 9,10-dihydroxy-(12Z)-octadecenoate. It participates in lipid metabolism. Catalyzes the hydrolysis of epoxide-containing fatty acids. Active against epoxyeicosatrienoic acids (EETs) including 8,9-epoxy-(5Z,11Z,14Z)-eicosatrienoate (8,9-EET), 11,12-epoxy-(5Z,8Z,14Z)-eicosatrienoate (11,12-EET) and 14,15-epoxy-(5Z,8Z,11Z)-eicosatrienoate (14,15-EET) and the linoleic acid metabolites 12,13-epoxy-(9Z)-octadecenoate (12,13-EpOME) and 9,10-epoxy-(12Z)-octadecenoate (9,10-EpOME). These epoxides function as lipid signaling molecules, the enzyme can deplete the supply of the epoxide signal by transforming them into diol species that are more readily eliminated through excretion. This chain is Epoxide hydrolase 1, found in Caenorhabditis elegans.